The chain runs to 44 residues: Photosystem I reaction center subunit IX (44 aa).

The helical transmembrane segment at 7 to 27 (YLSVAPVLATLWFGSLAGLLI) threads the bilayer.

This sequence belongs to the PsaJ family.

The protein resides in the plastid. It localises to the chloroplast thylakoid membrane. In terms of biological role, may help in the organization of the PsaE and PsaF subunits. This is Photosystem I reaction center subunit IX from Piper cenocladum (Ant piper).